Consider the following 919-residue polypeptide: MLX-interacting protein (919 aa).

Residues 1 to 72 (MAADVFMCSP…AGPGREEPPR (72 aa)) form a disordered region. Alanine 2 carries the post-translational modification N-acetylalanine. 4 positions are modified to phosphoserine: serine 9, serine 27, serine 33, and serine 39. A compositionally biased stretch (acidic residues) spans 27–37 (SEDDDDSDTDE). Positions 44–56 (SGAATPARAHASA) are enriched in low complexity. The tract at residues 73 to 327 (RQQIIHSGHF…PLQPNLDFMD (255 aa)) is required for cytoplasmic localization. The tract at residues 322 to 445 (NLDFMDTFEP…LLSPSPAPPP (124 aa)) is transactivation domain. Disordered stretches follow at residues 542-562 (KPVS…PAPK) and 633-712 (DLGH…SDPK). The residue at position 669 (serine 669) is a Phosphoserine. A compositionally biased stretch (polar residues) spans 670 to 685 (PQVTVTGPSRDCPNSG). Positions 686-706 (QASPCASEQSPSPQSPQNNCS) are enriched in low complexity. The region spanning 719–769 (NRQMKHISAEQKRRFNIKMCFDMLNSLISNNSKLTSHAITLQKTVEYITKL) is the bHLH domain. Positions 769-790 (LQQERGQMQEEARRLREEIEEL) are leucine-zipper. A mediates heterotypic interactions between MLXIP and MLX and is required for cytoplasmic localization region spans residues 832–881 (WKFWIFSIIIKPLFESFKGMVSTSSLEELHRTALSWLDQHCSLPILRPMV).

In terms of assembly, efficient DNA binding requires dimerization with another bHLH protein. Binds DNA as a homodimer or a heterodimer with MLX. As to expression, widely expressed in adult tissues. Most abundant in skeletal muscle.

The protein localises to the cytoplasm. The protein resides in the nucleus. It localises to the mitochondrion outer membrane. Its function is as follows. Binds DNA as a heterodimer with MLX and activates transcription. Binds to the canonical E box sequence 5'-CACGTG-3'. Plays a role in transcriptional activation of glycolytic target genes. Involved in glucose-responsive gene regulation. This is MLX-interacting protein from Homo sapiens (Human).